The sequence spans 431 residues: Ribosomal RNA small subunit methyltransferase B (431 aa).

S-adenosyl-L-methionine is bound by residues 254-260 (CAAPGGK), aspartate 277, aspartate 303, and aspartate 322. Catalysis depends on cysteine 375, which acts as the Nucleophile. The segment at 398–417 (LHATGTPASPGQQNLPGPEE) is disordered. Residues 403–412 (TPASPGQQNL) are compositionally biased toward polar residues.

The protein belongs to the class I-like SAM-binding methyltransferase superfamily. RsmB/NOP family.

The protein resides in the cytoplasm. It carries out the reaction cytidine(967) in 16S rRNA + S-adenosyl-L-methionine = 5-methylcytidine(967) in 16S rRNA + S-adenosyl-L-homocysteine + H(+). Functionally, specifically methylates the cytosine at position 967 (m5C967) of 16S rRNA. This is Ribosomal RNA small subunit methyltransferase B from Klebsiella pneumoniae (strain 342).